Here is a 300-residue protein sequence, read N- to C-terminus: CDP-diacylglycerol--serine O-phosphatidyltransferase (300 aa).

6 consecutive transmembrane segments (helical) span residues 10-30, 74-94, 95-115, 135-155, 162-182, and 207-227; these read AVNL…AGLT, IDSL…LYAT, MLST…CVVL, EFFV…LLAL, GWWT…MLLI, and LAIF…VIIL.

Belongs to the CDP-alcohol phosphatidyltransferase class-I family.

The protein resides in the cell membrane. It carries out the reaction a CDP-1,2-diacyl-sn-glycerol + L-serine = a 1,2-diacyl-sn-glycero-3-phospho-L-serine + CMP + H(+). In Mycobacterium leprae (strain TN), this protein is CDP-diacylglycerol--serine O-phosphatidyltransferase (pssA).